Reading from the N-terminus, the 156-residue chain is ATP synthase subunit b (156 aa).

The chain crosses the membrane as a helical span at residues 5–25; that stretch reads LTLIGQAIAFAFFVAFCMKFV.

This sequence belongs to the ATPase B chain family. As to quaternary structure, F-type ATPases have 2 components, F(1) - the catalytic core - and F(0) - the membrane proton channel. F(1) has five subunits: alpha(3), beta(3), gamma(1), delta(1), epsilon(1). F(0) has three main subunits: a(1), b(2) and c(10-14). The alpha and beta chains form an alternating ring which encloses part of the gamma chain. F(1) is attached to F(0) by a central stalk formed by the gamma and epsilon chains, while a peripheral stalk is formed by the delta and b chains.

The protein resides in the cell inner membrane. In terms of biological role, f(1)F(0) ATP synthase produces ATP from ADP in the presence of a proton or sodium gradient. F-type ATPases consist of two structural domains, F(1) containing the extramembraneous catalytic core and F(0) containing the membrane proton channel, linked together by a central stalk and a peripheral stalk. During catalysis, ATP synthesis in the catalytic domain of F(1) is coupled via a rotary mechanism of the central stalk subunits to proton translocation. Its function is as follows. Component of the F(0) channel, it forms part of the peripheral stalk, linking F(1) to F(0). This chain is ATP synthase subunit b, found in Acinetobacter baumannii (strain SDF).